Consider the following 158-residue polypeptide: Low molecular weight phosphotyrosine protein phosphatase (158 aa).

A2 is modified (N-acetylalanine). The Nucleophile role is filled by C13. The active site involves R19. D130 acts as the Proton donor in catalysis. Phosphotyrosine occurs at positions 132 and 133.

It belongs to the low molecular weight phosphotyrosine protein phosphatase family. In terms of assembly, interacts with EPHA2; dephosphorylates EPHA2. Interacts with EPHB1. Interacts with the SH3 domain of SPTAN1. In terms of processing, phosphorylated by LCK. Phosphorylation at Tyr-132 increases its phosphatase activity.

It localises to the cytoplasm. It catalyses the reaction O-phospho-L-tyrosyl-[protein] + H2O = L-tyrosyl-[protein] + phosphate. The enzyme catalyses a phosphate monoester + H2O = an alcohol + phosphate. Inhibited by sulfhydryl reagents. Acts on tyrosine phosphorylated proteins, low-MW aryl phosphates and natural and synthetic acyl phosphates with differences in substrate specificity between isoform 1 and isoform 2. The protein is Low molecular weight phosphotyrosine protein phosphatase (ACP1) of Sus scrofa (Pig).